The chain runs to 187 residues: Peptidyl-tRNA hydrolase (187 aa).

Tyr-15 contacts tRNA. His-20 (proton acceptor) is an active-site residue. 3 residues coordinate tRNA: Phe-65, Asn-67, and Asn-113.

It belongs to the PTH family. As to quaternary structure, monomer.

It is found in the cytoplasm. The catalysed reaction is an N-acyl-L-alpha-aminoacyl-tRNA + H2O = an N-acyl-L-amino acid + a tRNA + H(+). Hydrolyzes ribosome-free peptidyl-tRNAs (with 1 or more amino acids incorporated), which drop off the ribosome during protein synthesis, or as a result of ribosome stalling. In terms of biological role, catalyzes the release of premature peptidyl moieties from peptidyl-tRNA molecules trapped in stalled 50S ribosomal subunits, and thus maintains levels of free tRNAs and 50S ribosomes. This chain is Peptidyl-tRNA hydrolase, found in Elusimicrobium minutum (strain Pei191).